The chain runs to 141 residues: Succinate dehydrogenase assembly factor 2, mitochondrial (141 aa).

This sequence belongs to the SDHAF2 family. As to quaternary structure, interacts with the flavoprotein subunit within the SDH catalytic dimer.

The protein resides in the mitochondrion matrix. Its function is as follows. Plays an essential role in the assembly of succinate dehydrogenase (SDH), an enzyme complex (also referred to as respiratory complex II) that is a component of both the tricarboxylic acid (TCA) cycle and the mitochondrial electron transport chain, and which couples the oxidation of succinate to fumarate with the reduction of ubiquinone (coenzyme Q) to ubiquinol. Required for flavinylation (covalent attachment of FAD) of the flavoprotein subunit of the SDH catalytic dimer. This Dictyostelium discoideum (Social amoeba) protein is Succinate dehydrogenase assembly factor 2, mitochondrial.